The sequence spans 75 residues: Brevinin-2SN1 (75 aa).

The first 22 residues, 1-22 (MFTMKKPLLFLFFLGTISLSFC), serve as a signal peptide directing secretion. The propeptide at 23–40 (EEERGADEDDEVEMTEEE) is removed in mature form. Cysteine 69 and cysteine 75 are joined by a disulfide.

Belongs to the frog skin active peptide (FSAP) family. Brevinin subfamily. Expressed by the skin glands.

Its subcellular location is the secreted. Its function is as follows. Antimicrobial peptide. Active against some Gram-negative and a variety of Gram-positive bacterial strains. Active against fungus C.glabrata 090902 but not against C.albicans ATCC 10231. Shows hemolytic activity against human erythrocytes. The protein is Brevinin-2SN1 of Sylvirana spinulosa (Fine-spined frog).